Here is a 653-residue protein sequence, read N- to C-terminus: DNA-directed RNA polymerase III subunit RPC-3 (653 aa).

3 disordered regions span residues 141–186 (INGV…DSDP), 280–309 (DSSAPRKRLKLDGPLEDDVKDEDDGDDFSD), and 422–442 (IKEDEDDEDEEGGPVSMKRRG). Positions 159 to 170 (AENHTDHAHDYQ) are enriched in basic and acidic residues. Composition is skewed to acidic residues over residues 293–309 (PLEDDVKDEDDGDDFSD) and 424–433 (EDEDDEDEEG). The segment at 580 to 601 (TYKSMSRCLQRIRVEREKLKFL) is leucine-zipper.

This sequence belongs to the RNA polymerase beta chain family. In terms of assembly, component of the RNA polymerase III (Pol III) complex consisting of 17 subunits.

It is found in the nucleus. DNA-dependent RNA polymerase catalyzes the transcription of DNA into RNA using the four ribonucleoside triphosphates as substrates. Specific core component of RNA polymerase III which synthesizes small RNAs, such as 5S rRNA and tRNAs. The polypeptide is DNA-directed RNA polymerase III subunit RPC-3 (RPC-82) (Coccidioides immitis (strain RS) (Valley fever fungus)).